A 573-amino-acid chain; its full sequence is Urease subunit alpha 2 (573 aa).

In terms of domain architecture, Urease spans 135–573; the sequence is GGMDTHVHYI…ISLNQLYFFS (439 aa). His-140, His-142, and Lys-223 together coordinate Ni(2+). The residue at position 223 (Lys-223) is an N6-carboxylysine. His-225 is a binding site for substrate. Ni(2+) contacts are provided by His-252 and His-278. Catalysis depends on His-326, which acts as the Proton donor. A Ni(2+)-binding site is contributed by Asp-366.

This sequence belongs to the metallo-dependent hydrolases superfamily. Urease alpha subunit family. In terms of assembly, heterotrimer of UreA (gamma), UreB (beta) and UreC (alpha) subunits. Three heterotrimers associate to form the active enzyme. Ni cation serves as cofactor. Post-translationally, carboxylation allows a single lysine to coordinate two nickel ions.

The protein localises to the cytoplasm. The enzyme catalyses urea + 2 H2O + H(+) = hydrogencarbonate + 2 NH4(+). It functions in the pathway nitrogen metabolism; urea degradation; CO(2) and NH(3) from urea (urease route): step 1/1. The sequence is that of Urease subunit alpha 2 from Brucella melitensis biotype 1 (strain ATCC 23456 / CCUG 17765 / NCTC 10094 / 16M).